A 235-amino-acid chain; its full sequence is Large ribosomal subunit protein uL1 (235 aa).

This sequence belongs to the universal ribosomal protein uL1 family. In terms of assembly, part of the 50S ribosomal subunit.

Functionally, binds directly to 23S rRNA. The L1 stalk is quite mobile in the ribosome, and is involved in E site tRNA release. Protein L1 is also a translational repressor protein, it controls the translation of the L11 operon by binding to its mRNA. The protein is Large ribosomal subunit protein uL1 of Arthrobacter sp. (strain FB24).